A 294-amino-acid polypeptide reads, in one-letter code: 4-diphosphocytidyl-2-C-methyl-D-erythritol kinase (294 aa).

Residue Lys-15 is part of the active site. Pro-101–Ser-111 lines the ATP pocket. Residue Asp-143 is part of the active site.

This sequence belongs to the GHMP kinase family. IspE subfamily.

It carries out the reaction 4-CDP-2-C-methyl-D-erythritol + ATP = 4-CDP-2-C-methyl-D-erythritol 2-phosphate + ADP + H(+). It functions in the pathway isoprenoid biosynthesis; isopentenyl diphosphate biosynthesis via DXP pathway; isopentenyl diphosphate from 1-deoxy-D-xylulose 5-phosphate: step 3/6. In terms of biological role, catalyzes the phosphorylation of the position 2 hydroxy group of 4-diphosphocytidyl-2C-methyl-D-erythritol. In Fusobacterium nucleatum subsp. nucleatum (strain ATCC 25586 / DSM 15643 / BCRC 10681 / CIP 101130 / JCM 8532 / KCTC 2640 / LMG 13131 / VPI 4355), this protein is 4-diphosphocytidyl-2-C-methyl-D-erythritol kinase.